The sequence spans 375 residues: PPPGKKTRGRVKIKMEFIDNKLRRYTTFSKRKTGIMKKAYELSTLTGTQVLLLVASETGHVYTFATRKLQPMITSETGKALIQTCLNSPDSPPRSDPTTDQRMSATGFEETDLTYQVSESDSSGETKDVLKPTFTVTNLPGTTSTIQTAPTTSSSMQVSSGPSFPITNYLAPVSASISPSAVTSANGTVLKTTGASAVTSGGLMQIPTGFTLMSGGTMAQQVPVQAIQVHQAPQQTSPSSDSSTDLTQTSPSGTVTLPATIMTSSVPTTVGGHMMYPSPHAVMYAPTSGLADGGLAVLNAFSQTPSAMQVSHSQVQDQGGVPQVFLTAPSGTVQIPVSAVQLHQMAVIGQQSSSGSSLTELQXVNLDTSHNAKSD.

The region spanning 10–64 is the MADS-box domain; sequence RVKIKMEFIDNKLRRYTTFSKRKTGIMKKAYELSTLTGTQVLLLVASETGHVYTF. Residues 228 to 257 form a disordered region; sequence QVHQAPQQTSPSSDSSTDLTQTSPSGTVTL. The segment covering 233–252 has biased composition (low complexity); the sequence is PQQTSPSSDSSTDLTQTSPS.

In terms of assembly, binds DNA as a multimer, probably a dimer.

It localises to the nucleus. Its function is as follows. SRF is a transcription factor that binds to the serum response element (SRE), a short sequence of dyad symmetry located 300 bp to the 5' of the site of transcription initiation of some genes (such as FOS). Together with MRTFA transcription coactivator, controls expression of genes regulating the cytoskeleton during development, morphogenesis and cell migration. The polypeptide is Serum response factor (SRF) (Gallus gallus (Chicken)).